Here is a 261-residue protein sequence, read N- to C-terminus: Glutamate racemase (261 aa).

Residues 7–8 (DS) and 39–40 (YG) contribute to the substrate site. The active-site Proton donor/acceptor is Cys71. Residue 72–73 (NT) coordinates substrate. The active-site Proton donor/acceptor is the Cys184. 185–186 (TH) contributes to the substrate binding site.

This sequence belongs to the aspartate/glutamate racemases family.

It carries out the reaction L-glutamate = D-glutamate. It functions in the pathway cell wall biogenesis; peptidoglycan biosynthesis. Functionally, provides the (R)-glutamate required for cell wall biosynthesis. This chain is Glutamate racemase, found in Aliarcobacter butzleri (strain RM4018) (Arcobacter butzleri).